A 290-amino-acid polypeptide reads, in one-letter code: Probable protein phosphatase 2C 62 (290 aa).

Positions 38 to 288 (KHGYHLVKGK…DDISCIVVKF (251 aa)) constitute a PPM-type phosphatase domain. Mn(2+)-binding residues include aspartate 75, glycine 76, aspartate 240, and aspartate 279.

This sequence belongs to the PP2C family. Mg(2+) serves as cofactor. Mn(2+) is required as a cofactor.

It carries out the reaction O-phospho-L-seryl-[protein] + H2O = L-seryl-[protein] + phosphate. The enzyme catalyses O-phospho-L-threonyl-[protein] + H2O = L-threonyl-[protein] + phosphate. The sequence is that of Probable protein phosphatase 2C 62 from Oryza sativa subsp. japonica (Rice).